A 155-amino-acid polypeptide reads, in one-letter code: 6,7-dimethyl-8-ribityllumazine synthase (155 aa).

5-amino-6-(D-ribitylamino)uracil is bound by residues Phe-23, 57-59 (AFE), and 81-83 (AVI). A (2S)-2-hydroxy-3-oxobutyl phosphate-binding site is contributed by 86–87 (ST). The active-site Proton donor is the His-89. Phe-114 provides a ligand contact to 5-amino-6-(D-ribitylamino)uracil. (2S)-2-hydroxy-3-oxobutyl phosphate is bound at residue Arg-128.

This sequence belongs to the DMRL synthase family.

It catalyses the reaction (2S)-2-hydroxy-3-oxobutyl phosphate + 5-amino-6-(D-ribitylamino)uracil = 6,7-dimethyl-8-(1-D-ribityl)lumazine + phosphate + 2 H2O + H(+). The protein operates within cofactor biosynthesis; riboflavin biosynthesis; riboflavin from 2-hydroxy-3-oxobutyl phosphate and 5-amino-6-(D-ribitylamino)uracil: step 1/2. Its function is as follows. Catalyzes the formation of 6,7-dimethyl-8-ribityllumazine by condensation of 5-amino-6-(D-ribitylamino)uracil with 3,4-dihydroxy-2-butanone 4-phosphate. This is the penultimate step in the biosynthesis of riboflavin. In Geobacter metallireducens (strain ATCC 53774 / DSM 7210 / GS-15), this protein is 6,7-dimethyl-8-ribityllumazine synthase.